Here is a 689-residue protein sequence, read N- to C-terminus: Beta-adrenergic receptor kinase 1 (689 aa).

The N-terminal stretch occupies residues 1-190 (MADLEAVLAD…ELNIHLTMND (190 aa)). An RGS domain is found at 54–175 (TFEKIFSQKL…IESDKFTRFC (122 aa)). The Protein kinase domain maps to 191–453 (FSVHRIIGRG…AQEVKESPFF (263 aa)). Residues 197 to 205 (IGRGGFGEV) and Lys-220 each bind ATP. Catalysis depends on Asp-317, which acts as the Proton acceptor. An AGC-kinase C-terminal domain is found at 454–521 (RSLDWQMVFL…TISERWQQEV (68 aa)). In terms of domain architecture, PH spans 558–652 (DCIMHGYMSK…WKKELRDAYR (95 aa)). The residue at position 670 (Ser-670) is a Phosphoserine.

The protein belongs to the protein kinase superfamily. AGC Ser/Thr protein kinase family. GPRK subfamily. Interacts with the heterodimer formed by GNB1 and GNG2. Interacts with GIT1. Interacts with, and phosphorylates chemokine-stimulated CCR5. Interacts with ARRB1. Interacts with LPAR1 and LPAR2. Interacts with RALA in response to LPAR1 activation. ADRBK1 and RALA mutually inhibit each other's binding to LPAR1. Interacts with ADRB2.

It is found in the cytoplasm. It localises to the cell membrane. Its subcellular location is the postsynapse. The protein localises to the presynapse. It catalyses the reaction [beta-adrenergic receptor] + ATP = [beta-adrenergic receptor]-phosphate + ADP + H(+). With respect to regulation, in contrast to other AGC family kinases, the catalytic activity is solely regulated by the binding of substrates and ligands, not by phosphorylation of the kinase domain. Specifically phosphorylates the agonist-occupied form of the beta-adrenergic and closely related receptors, probably inducing a desensitization of them. Key regulator of LPAR1 signaling. Competes with RALA for binding to LPAR1 thus affecting the signaling properties of the receptor. Desensitizes LPAR1 and LPAR2 in a phosphorylation-independent manner. Positively regulates ciliary smoothened (SMO)-dependent Hedgehog (Hh) signaling pathway by facilitating the trafficking of SMO into the cilium and the stimulation of SMO activity. Inhibits relaxation of airway smooth muscle in response to blue light. The sequence is that of Beta-adrenergic receptor kinase 1 from Mesocricetus auratus (Golden hamster).